The following is a 452-amino-acid chain: Exodeoxyribonuclease 7 large subunit (452 aa).

The protein belongs to the XseA family. In terms of assembly, heterooligomer composed of large and small subunits.

It is found in the cytoplasm. It catalyses the reaction Exonucleolytic cleavage in either 5'- to 3'- or 3'- to 5'-direction to yield nucleoside 5'-phosphates.. Bidirectionally degrades single-stranded DNA into large acid-insoluble oligonucleotides, which are then degraded further into small acid-soluble oligonucleotides. The polypeptide is Exodeoxyribonuclease 7 large subunit (Bacillus anthracis (strain A0248)).